Consider the following 268-residue polypeptide: Nickel import ATP-binding protein NikE (268 aa).

The 249-residue stretch at 4 to 252 (LNVCGLSHHY…SSDAGRVLQN (249 aa)) folds into the ABC transporter domain. Residue 45-52 (GRSGCGKS) coordinates ATP.

This sequence belongs to the ABC transporter superfamily. Nickel importer (TC 3.A.1.5.3) family. As to quaternary structure, the complex is composed of two ATP-binding proteins (NikD and NikE), two transmembrane proteins (NikB and NikC) and a solute-binding protein (NikA).

Its subcellular location is the cell inner membrane. The enzyme catalyses Ni(2+)(out) + ATP + H2O = Ni(2+)(in) + ADP + phosphate + H(+). Part of the ABC transporter complex NikABCDE involved in nickel import. Responsible for energy coupling to the transport system. The polypeptide is Nickel import ATP-binding protein NikE (Shigella flexneri serotype 5b (strain 8401)).